The sequence spans 409 residues: Casein kinase I isoform delta-B (409 aa).

Positions Tyr9–Phe277 constitute a Protein kinase domain. Residues Ile15–Ile23 and Lys38 contribute to the ATP site. Asp128 (proton acceptor) is an active-site residue. The span at Thr300–Met315 shows a compositional bias: basic and acidic residues. Residues Thr300–Lys409 are disordered. The tract at residues His317–Pro341 is autoinhibitory. 2 stretches are compositionally biased toward polar residues: residues Thr346 to Arg358 and Asn380 to Ile402.

The protein belongs to the protein kinase superfamily. Monomer. Interacts with per1 and per2. Component of the circadian core oscillator. Autophosphorylated on serine and threonine residues.

It is found in the cytoplasm. It localises to the nucleus. It carries out the reaction L-seryl-[protein] + ATP = O-phospho-L-seryl-[protein] + ADP + H(+). It catalyses the reaction L-threonyl-[protein] + ATP = O-phospho-L-threonyl-[protein] + ADP + H(+). With respect to regulation, exhibits substrate-dependent heparin activation. Casein kinases are operationally defined by their preferential utilization of acidic proteins such as caseins as substrates. Central component of the circadian clock. May act as a negative regulator of circadian rhythmicity by phosphorylating per1 and per2, which may lead to their degradation. Participates in wnt signaling. This Danio rerio (Zebrafish) protein is Casein kinase I isoform delta-B (csnk1db).